The following is a 223-amino-acid chain: Proteasome subunit beta type-1 (223 aa).

The protein belongs to the peptidase T1B family. Component of the 20S core complex of the 26S proteasome. The 26S proteasome is composed of a core protease (CP), known as the 20S proteasome, capped at one or both ends by the 19S regulatory particle (RP/PA700). The 20S proteasome core is composed of 28 subunits that are arranged in four stacked rings, resulting in a barrel-shaped structure. The two end rings are each formed by seven alpha subunits, and the two central rings are each formed by seven beta subunits. The catalytic chamber with the active sites is on the inside of the barrel. As to expression, present in all tissues examined. Slightly lower levels in roots.

The protein resides in the cytoplasm. Its subcellular location is the nucleus. Functionally, non-catalytic component of the proteasome, a multicatalytic proteinase complex which is characterized by its ability to cleave peptides with Arg, Phe, Tyr, Leu, and Glu adjacent to the leaving group at neutral or slightly basic pH. The proteasome has an ATP-dependent proteolytic activity. The polypeptide is Proteasome subunit beta type-1 (PBF1) (Arabidopsis thaliana (Mouse-ear cress)).